The chain runs to 351 residues: Silk gland factor 3 (351 aa).

2 disordered regions span residues 61–88 and 131–154; these read ADPWAMHQHHAHAHQPDVKPPPAPHDHR and SSPRDPLHHHAMERDQPEEDTPTS. The span at 135–145 shows a compositional bias: basic and acidic residues; it reads DPLHHHAMERD. One can recognise a POU-specific domain in the interval 149 to 223; the sequence is EDTPTSDDLE…LLQKWLEEAD (75 aa). Residues 241–300 constitute a DNA-binding region (homeobox); sequence KRKKRTSIEVSVKGALEQHFHKQPKPSAQEITSLADSLQLEKEVVRVWFCNRRQKEKRMT. The disordered stretch occupies residues 314-351; it reads GHAHYGHGDVHGSPLQHSPPGLSPQHGLPQGAHTLAAH.

It belongs to the POU transcription factor family. Class-3 subfamily. Restricted to the middle silk gland.

The protein resides in the nucleus. Its function is as follows. Involved in the transcriptional regulation of sericin-1 gene. This chain is Silk gland factor 3 (SGF3), found in Bombyx mori (Silk moth).